The primary structure comprises 159 residues: Phosphopantetheine adenylyltransferase (159 aa).

Thr8 provides a ligand contact to substrate. ATP is bound by residues 8 to 9 (TF) and His16. Residues Lys40, Thr72, and Arg86 each coordinate substrate. ATP contacts are provided by residues 87–89 (GLR), Glu97, and 122–128 (YSFLSSS).

This sequence belongs to the bacterial CoaD family. As to quaternary structure, homohexamer. Requires Mg(2+) as cofactor.

The protein resides in the cytoplasm. The enzyme catalyses (R)-4'-phosphopantetheine + ATP + H(+) = 3'-dephospho-CoA + diphosphate. It functions in the pathway cofactor biosynthesis; coenzyme A biosynthesis; CoA from (R)-pantothenate: step 4/5. Functionally, reversibly transfers an adenylyl group from ATP to 4'-phosphopantetheine, yielding dephospho-CoA (dPCoA) and pyrophosphate. The chain is Phosphopantetheine adenylyltransferase from Prochlorococcus marinus subsp. pastoris (strain CCMP1986 / NIES-2087 / MED4).